The primary structure comprises 316 residues: tRNA dimethylallyltransferase (316 aa).

17-24 (GPTASGKT) is an ATP binding site. Position 19-24 (19-24 (TASGKT)) interacts with substrate. Interaction with substrate tRNA stretches follow at residues 42 to 45 (DSAL), 166 to 170 (QRLSR), and 247 to 252 (RCVGYR).

This sequence belongs to the IPP transferase family. In terms of assembly, monomer. Mg(2+) serves as cofactor.

The catalysed reaction is adenosine(37) in tRNA + dimethylallyl diphosphate = N(6)-dimethylallyladenosine(37) in tRNA + diphosphate. Functionally, catalyzes the transfer of a dimethylallyl group onto the adenine at position 37 in tRNAs that read codons beginning with uridine, leading to the formation of N6-(dimethylallyl)adenosine (i(6)A). The chain is tRNA dimethylallyltransferase from Salmonella typhi.